A 302-amino-acid polypeptide reads, in one-letter code: F-box protein At1g20360 (302 aa).

An F-box domain is found at Met-1–Leu-48.

This chain is F-box protein At1g20360, found in Arabidopsis thaliana (Mouse-ear cress).